We begin with the raw amino-acid sequence, 208 residues long: MPRLYLGKIPYNARERDVERFLKGYGKINNISMKYGFAFVDFEDSRDAEDACHDLDGKTMEGSSMRLVVEMARGKPRGNDRHGSRSPRRRSRSPRRRSRTPPRRRSRSRDRKRSRRSRSRSSSRSRSPVRESRRRSESRSPSPKRDLKREASRSRSPLPAKDRSRTRSGSPPKNGGDRKRSVSRGRSHSRDGSNRSVSRSPSPGSPKD.

Residues 2–74 form the RRM domain; it reads PRLYLGKIPY…MRLVVEMARG (73 aa). A disordered region spans residues 71–208; that stretch reads MARGKPRGND…RSPSPGSPKD (138 aa). A compositionally biased stretch (basic residues) spans 84–123; that stretch reads SRSPRRRSRSPRRRSRTPPRRRSRSRDRKRSRRSRSRSSS. Residues 128 to 153 show a composition bias toward basic and acidic residues; the sequence is PVRESRRRSESRSPSPKRDLKREASR.

The protein belongs to the splicing factor SR family. Extensively phosphorylated on serine residues in the RS domain.

It localises to the nucleus. In terms of biological role, plays a functionally redundant role in shifting germ cell sexual differentiation in hermaphrodites. The polypeptide is Probable splicing factor, arginine/serine-rich 5 (rsp-5) (Caenorhabditis elegans).